The following is a 461-amino-acid chain: Nuclear distribution protein PAC1 (461 aa).

The 33-residue stretch at 9–41 folds into the LisH domain; the sequence is QAEELHKSIIAYLTANNLLNTANTLRAELNLSE. WD repeat units lie at residues 114 to 155, 157 to 197, 201 to 248, 251 to 290, 312 to 355, 357 to 396, and 401 to 457; these read SHRD…RTIK, HTRA…KNIR, GHDH…CVRT, GHTA…PESK, QYLS…LMTL, GHDN…KCIK, and AHER…MKLR.

It belongs to the WD repeat LIS1/nudF family. As to quaternary structure, self-associates. Interacts with NDL1 and dynein.

Its subcellular location is the cytoplasm. It is found in the cytoskeleton. The protein resides in the spindle pole. Its function is as follows. Positively regulates the activity of the minus-end directed microtubule motor protein dynein. May enhance dynein-mediated microtubule sliding by targeting dynein to the microtubule plus end. Required for nuclear migration during vegetative growth as well as development. Required for retrograde early endosome (EE) transport from the hyphal tip. Required for localization of dynein to the mitotic spindle poles. Recruits additional proteins to the dynein complex at SPBs. The sequence is that of Nuclear distribution protein PAC1 from Arthroderma otae (strain ATCC MYA-4605 / CBS 113480) (Microsporum canis).